The chain runs to 202 residues: ATP-dependent Clp protease proteolytic subunit (202 aa).

S106 functions as the Nucleophile in the catalytic mechanism. H131 is a catalytic residue.

Belongs to the peptidase S14 family. As to quaternary structure, fourteen ClpP subunits assemble into 2 heptameric rings which stack back to back to give a disk-like structure with a central cavity, resembling the structure of eukaryotic proteasomes.

It is found in the cytoplasm. It carries out the reaction Hydrolysis of proteins to small peptides in the presence of ATP and magnesium. alpha-casein is the usual test substrate. In the absence of ATP, only oligopeptides shorter than five residues are hydrolyzed (such as succinyl-Leu-Tyr-|-NHMec, and Leu-Tyr-Leu-|-Tyr-Trp, in which cleavage of the -Tyr-|-Leu- and -Tyr-|-Trp bonds also occurs).. In terms of biological role, cleaves peptides in various proteins in a process that requires ATP hydrolysis. Has a chymotrypsin-like activity. Plays a major role in the degradation of misfolded proteins. In Shewanella oneidensis (strain ATCC 700550 / JCM 31522 / CIP 106686 / LMG 19005 / NCIMB 14063 / MR-1), this protein is ATP-dependent Clp protease proteolytic subunit.